The following is a 444-amino-acid chain: ATP-dependent protease ATPase subunit HslU (444 aa).

Residues Val18, Gly60–Glu65, Asp258, Glu323, and Arg395 contribute to the ATP site.

Belongs to the ClpX chaperone family. HslU subfamily. A double ring-shaped homohexamer of HslV is capped on each side by a ring-shaped HslU homohexamer. The assembly of the HslU/HslV complex is dependent on binding of ATP.

The protein localises to the cytoplasm. In terms of biological role, ATPase subunit of a proteasome-like degradation complex; this subunit has chaperone activity. The binding of ATP and its subsequent hydrolysis by HslU are essential for unfolding of protein substrates subsequently hydrolyzed by HslV. HslU recognizes the N-terminal part of its protein substrates and unfolds these before they are guided to HslV for hydrolysis. The chain is ATP-dependent protease ATPase subunit HslU from Thioalkalivibrio sulfidiphilus (strain HL-EbGR7).